Here is a 419-residue protein sequence, read N- to C-terminus: Putative competence-damage inducible protein (419 aa).

Belongs to the CinA family.

The chain is Putative competence-damage inducible protein from Streptococcus agalactiae serotype III (strain NEM316).